The primary structure comprises 545 residues: Methionine--tRNA ligase (545 aa).

Positions 12 to 22 (PYANGSLHIGH) match the 'HIGH' region motif. Residues cysteine 143, cysteine 146, cysteine 156, and cysteine 159 each contribute to the Zn(2+) site. A 'KMSKS' region motif is present at residues 329-333 (KLSKS). Position 332 (lysine 332) interacts with ATP.

It belongs to the class-I aminoacyl-tRNA synthetase family. MetG type 1 subfamily. In terms of assembly, monomer. It depends on Zn(2+) as a cofactor.

It is found in the cytoplasm. It catalyses the reaction tRNA(Met) + L-methionine + ATP = L-methionyl-tRNA(Met) + AMP + diphosphate. Is required not only for elongation of protein synthesis but also for the initiation of all mRNA translation through initiator tRNA(fMet) aminoacylation. In Buchnera aphidicola subsp. Baizongia pistaciae (strain Bp), this protein is Methionine--tRNA ligase (metG).